The chain runs to 258 residues: Ureidoacrylate amidohydrolase RutB (258 aa).

Positions 1 to 23 (MDRPTTYPMDQPAGFRDAQGRHG) are disordered. The active-site Proton acceptor is the D47. K156 is an active-site residue. C189 (nucleophile) is an active-site residue.

It belongs to the isochorismatase family. RutB subfamily.

The enzyme catalyses (Z)-3-ureidoacrylate + H2O + H(+) = (Z)-3-aminoacrylate + NH4(+) + CO2. It carries out the reaction (Z)-3-ureidoacrylate + H2O = (Z)-3-aminoacrylate + carbamate + H(+). It catalyses the reaction (Z)-2-methylureidoacrylate + H2O + H(+) = (Z)-2-methylaminoacrylate + NH4(+) + CO2. Functionally, hydrolyzes ureidoacrylate to form aminoacrylate and carbamate. The carbamate hydrolyzes spontaneously, thereby releasing one of the nitrogen atoms of the pyrimidine ring as ammonia and one of its carbon atoms as CO2. This is Ureidoacrylate amidohydrolase RutB from Methylobacterium radiotolerans (strain ATCC 27329 / DSM 1819 / JCM 2831 / NBRC 15690 / NCIMB 10815 / 0-1).